Consider the following 443-residue polypeptide: Mitochondrial enolase superfamily member 1 (443 aa).

Substrate-binding positions include 24-26 (GSD) and Tyr-34. Ser-148 bears the Phosphoserine mark. Lys-220 contributes to the substrate binding site. The active-site Proton donor/acceptor is the Lys-222. Asp-250 lines the Mg(2+) pocket. Residues Asn-252, Glu-276, Glu-305, 355 to 357 (HAG), and Glu-386 each bind substrate. Mg(2+) contacts are provided by Glu-276 and Glu-305. His-355 is an active-site residue.

The protein belongs to the mandelate racemase/muconate lactonizing enzyme family. ENOSF1 subfamily. Mg(2+) serves as cofactor. Post-translationally, could be sumoylated.

The protein localises to the mitochondrion. The enzyme catalyses L-fuconate = 2-dehydro-3-deoxy-L-fuconate + H2O. Plays a role in the catabolism of L-fucose, a sugar that is part of the carbohydrates that are attached to cellular glycoproteins. Catalyzes the dehydration of L-fuconate to 2-keto-3-deoxy-L-fuconate by the abstraction of the 2-proton to generate an enediolate intermediate that is stabilized by the magnesium ion. May down-regulate thymidylate synthase activity, possibly already at the RNA level, by promoting the degradation of TYMS mRNA via an antisense RNA-based mechanism. This Pongo abelii (Sumatran orangutan) protein is Mitochondrial enolase superfamily member 1 (ENOSF1).